We begin with the raw amino-acid sequence, 466 residues long: Asparagine--tRNA ligase (466 aa).

The protein belongs to the class-II aminoacyl-tRNA synthetase family. Homodimer.

It is found in the cytoplasm. It carries out the reaction tRNA(Asn) + L-asparagine + ATP = L-asparaginyl-tRNA(Asn) + AMP + diphosphate + H(+). The sequence is that of Asparagine--tRNA ligase from Xylella fastidiosa (strain Temecula1 / ATCC 700964).